We begin with the raw amino-acid sequence, 41 residues long: LGNVLVCVLAHHFGKEFTPQVQAAYQKVVAGVANALAHKYH.

One can recognise a Globin domain in the interval 1 to 41 (LGNVLVCVLAHHFGKEFTPQVQAAYQKVVAGVANALAHKYH). At lysine 39 the chain carries N6-acetyllysine.

This sequence belongs to the globin family. In terms of assembly, heterotetramer of two alpha chains and two beta chains. Red blood cells.

In terms of biological role, involved in oxygen transport from the lung to the various peripheral tissues. This is Hemoglobin subunit beta (HBB) from Colobus guereza (Mantled guereza).